A 65-amino-acid polypeptide reads, in one-letter code: Large ribosomal subunit protein bL33m (65 aa).

A mitochondrion-targeting transit peptide spans 1–8 (MFLSAVFF).

This sequence belongs to the bacterial ribosomal protein bL33 family. Component of the mitochondrial large ribosomal subunit (mt-LSU). Mature mammalian 55S mitochondrial ribosomes consist of a small (28S) and a large (39S) subunit. The 28S small subunit contains a 12S ribosomal RNA (12S mt-rRNA) and 30 different proteins. The 39S large subunit contains a 16S rRNA (16S mt-rRNA), a copy of mitochondrial valine transfer RNA (mt-tRNA(Val)), which plays an integral structural role, and 52 different proteins.

It is found in the mitochondrion. This chain is Large ribosomal subunit protein bL33m (MRPL33), found in Homo sapiens (Human).